The primary structure comprises 275 residues: Axoneme-associated protein mst101(3) (275 aa).

12 consecutive repeat copies span residues Lys-64–Glu-79, Lys-80–Glu-95, Lys-96–Gln-111, Lys-112–Glu-127, Lys-128–Glu-143, Arg-144–Ala-159, Ala-160–Lys-175, Lys-181–Ala-196, Lys-197–Val-212, Lys-215–Ala-230, Lys-231–Ala-246, and Lys-249–Ala-264. Residues Lys-64–Ala-264 are 12 X 16 AA tandem repeats of [KRA]-K-[KEM]-[CKA]-[AEKD]-[EA]-[ALE]-[AMK]-[FKAML]-[KQA]-[EQKA]-[KQCEM]-[ECLA]-[AEQ]-[AEQ]-[EQAKV].

In terms of tissue distribution, testis.

It is found in the cytoplasm. Functionally, possible structural role in the sperm tail. This chain is Axoneme-associated protein mst101(3) (mst101(3)), found in Drosophila hydei (Fruit fly).